The sequence spans 2567 residues: Highly reducing polyketide synthase sor1 (2567 aa).

The Ketosynthase family 3 (KS3) domain maps to 14–436 (SEPIAIIGMS…GANAHIILED (423 aa)). Residues Cys-187, His-322, and His-359 each act as for beta-ketoacyl synthase activity in the active site. Residues 550–841 (VFTGQGAQWW…VVEVGPHTAL (292 aa)) are malonyl-CoA:ACP transacylase (MAT) domain. Residues 939 to 1079 (HHLLGSLVEG…GLISIEFEAS (141 aa)) form an N-terminal hotdog fold region. The interval 939–1249 (HHLLGSLVEG…GFSYQSLGRS (311 aa)) is dehydratase (DH) domain. The PKS/mFAS DH domain maps to 939–1252 (HHLLGSLVEG…YQSLGRSVSL (314 aa)). His-971 serves as the catalytic Proton acceptor; for dehydratase activity. The segment at 1095–1252 (YKRQIPPAQL…YQSLGRSVSL (158 aa)) is C-terminal hotdog fold. The active-site Proton donor; for dehydratase activity is the Asp-1161. A methyltransferase (CMet) domain region spans residues 1426–1534 (LEIGASTGGI…RSLLKPGGTL (109 aa)). The enoyl reductase (ER) domain stretch occupies residues 1852-2163 (FLPELLVFGD…TEEETGKRVL (312 aa)). The interval 2187-2369 (ASYLIVGGNG…AVSIDLSLVD (183 aa)) is ketoreductase (KR) domain. The Carrier domain maps to 2481–2558 (EAISVVGSAV…QLVANVVDRS (78 aa)). Ser-2518 is subject to O-(pantetheine 4'-phosphoryl)serine.

It participates in secondary metabolite biosynthesis. Its function is as follows. Highly reducing polyketide synthase; part of the SOR gene cluster that mediates the biosynthesis of sorbicillinoids, a diverse group of yellow secondary metabolites that restrict growth of competing pathogenic fungi but not of bacteria. Sorbicillinoids biosynthesis requires the action of two PKSs. The SOR cluster is required for the production of trichodimerol and dihydrotrichotetronin, with sor2 being sufficient for production of trichodimerol, but not dihydrotrichotetronin in the light. Sor1 iteratively combines three acetyl units and the growing chain is modified by the ketoacyl reductase subunit, and optional by the enoyl reductase subunit in the second cycle. The polyketide is then handed over to the PKS sor2, which adds three more acetyl units, and two methyl groups. Sor2 releases an aldehyde, which undergoes spontaneous cyclization resulting in the formation of sorbicillin or 2',3'-dihydrosorbicillin. The monooxygenase sor5 oxidizes sorbicillin and 2',3'-dihydrosorbicillin to 2',3'-dihydrosorbicillinol and sorbicillinol, respectively. The oxidoreductase sor8 further converts sorbicillinol into oxosorbicillinol. Sorbicillinol is the building block for the other sorbicillinoids such as disorbicillinol, bisvertinolon, dihydrobisvertinolone, and dihydrotrichotetronine. The polypeptide is Highly reducing polyketide synthase sor1 (Hypocrea jecorina (strain QM6a) (Trichoderma reesei)).